We begin with the raw amino-acid sequence, 438 residues long: DNA primase DnaG (438 aa).

In terms of domain architecture, Toprim spans 171 to 245 (DAILVVEGRA…DIDYVARAPE (75 aa)). Residues glutamate 177, aspartate 219, and aspartate 221 each contribute to the Mg(2+) site.

It belongs to the archaeal DnaG primase family. As to quaternary structure, forms a ternary complex with MCM helicase and DNA. Component of the archaeal exosome complex. Mg(2+) is required as a cofactor.

It catalyses the reaction ssDNA + n NTP = ssDNA/pppN(pN)n-1 hybrid + (n-1) diphosphate.. Its function is as follows. RNA polymerase that catalyzes the synthesis of short RNA molecules used as primers for DNA polymerase during DNA replication. Also part of the exosome, which is a complex involved in RNA degradation. Acts as a poly(A)-binding protein that enhances the interaction between heteromeric, adenine-rich transcripts and the exosome. The chain is DNA primase DnaG from Methanothrix thermoacetophila (strain DSM 6194 / JCM 14653 / NBRC 101360 / PT) (Methanosaeta thermophila).